Consider the following 219-residue polypeptide: Ribose-5-phosphate isomerase A (219 aa).

Substrate is bound by residues 28–31 (SGST), 81–84 (DGAD), and 94–97 (KGGG). E103 acts as the Proton acceptor in catalysis. K121 contacts substrate.

The protein belongs to the ribose 5-phosphate isomerase family. Homodimer.

The catalysed reaction is aldehydo-D-ribose 5-phosphate = D-ribulose 5-phosphate. It functions in the pathway carbohydrate degradation; pentose phosphate pathway; D-ribose 5-phosphate from D-ribulose 5-phosphate (non-oxidative stage): step 1/1. Functionally, catalyzes the reversible conversion of ribose-5-phosphate to ribulose 5-phosphate. The protein is Ribose-5-phosphate isomerase A of Glaesserella parasuis serovar 5 (strain SH0165) (Haemophilus parasuis).